The following is a 658-amino-acid chain: Glycogen debranching enzyme (658 aa).

The Nucleophile role is filled by Asp336. Glu371 (proton donor) is an active-site residue. The segment at 459-484 (EANGEENRDGTNSNYSDNHGKEGLGG) is disordered.

It belongs to the glycosyl hydrolase 13 family.

The enzyme catalyses Hydrolysis of (1-&gt;6)-alpha-D-glucosidic linkages to branches with degrees of polymerization of three or four glucose residues in limit dextrin.. Its pathway is glycan degradation; glycogen degradation. Removes maltotriose and maltotetraose chains that are attached by 1,6-alpha-linkage to the limit dextrin main chain, generating a debranched limit dextrin. This is Glycogen debranching enzyme from Salmonella paratyphi B (strain ATCC BAA-1250 / SPB7).